The primary structure comprises 664 residues: Intraflagellar transport protein 70A (664 aa).

TPR repeat units follow at residues 11-44 (DGEF…SPRS), 45-78 (RAGL…HPEL), 153-186 (LDGQ…SGYR), 188-220 (DLSY…GIRQ), 392-423 (LTKQ…EKYI), 424-456 (PVLM…CNDH), and 458-491 (VWKL…HYDN). Residues 507–534 (YIMTSQNEEAEELMRKIEKEEEQLSYDD) are a coiled coil. A TPR 8 repeat occupies 543–576 (CIVNLVIGTLYCAKGNYDFGISRVIKSLEPYNKK).

It belongs to the TTC30/dfy-1/fleer family.

Its subcellular location is the cell projection. The protein localises to the cilium. Required for polyglutamylation of axonemal tubulin. Plays a role in anterograde intraflagellar transport (IFT), the process by which cilia precursors are transported from the base of the cilium to the site of their incorporation at the tip. The sequence is that of Intraflagellar transport protein 70A (IFT70A) from Bos taurus (Bovine).